A 305-amino-acid polypeptide reads, in one-letter code: Probable 2-methylisocitrate lyase 1 (305 aa).

52-54 (SGA) contacts substrate. Mg(2+)-binding residues include Asp91 and Asp93. Residues 128–129 (CG), Arg163, Glu193, 216–218 (NMT), Arg247, and Arg276 each bind substrate.

This sequence belongs to the isocitrate lyase/PEP mutase superfamily. Methylisocitrate lyase family. As to quaternary structure, homotetramer; dimer of dimers. It depends on Mg(2+) as a cofactor.

It carries out the reaction (2S,3R)-3-hydroxybutane-1,2,3-tricarboxylate = pyruvate + succinate. Catalyzes the thermodynamically favored C-C bond cleavage of (2R,3S)-2-methylisocitrate to yield pyruvate and succinate via an alpha-carboxy-carbanion intermediate. This Corynebacterium glutamicum (strain ATCC 13032 / DSM 20300 / JCM 1318 / BCRC 11384 / CCUG 27702 / LMG 3730 / NBRC 12168 / NCIMB 10025 / NRRL B-2784 / 534) protein is Probable 2-methylisocitrate lyase 1.